We begin with the raw amino-acid sequence, 576 residues long: Type II restriction enzyme BsuRI (576 aa).

Monomer. The cofactor is Mg(2+).

It catalyses the reaction Endonucleolytic cleavage of DNA to give specific double-stranded fragments with terminal 5'-phosphates.. A P subtype restriction enzyme that recognizes the double-stranded sequence 5'-GGCC-3' and cleaves after G-2. The sequence is that of Type II restriction enzyme BsuRI (hsdRR) from Bacillus subtilis.